The sequence spans 169 residues: uncharacterized protein (169 aa).

Residues 144–157 (AEAHSASPASSDSS) show a composition bias toward low complexity. The tract at residues 144 to 169 (AEAHSASPASSDSSPLTNNIRPISIM) is disordered. The span at 158-169 (PLTNNIRPISIM) shows a compositional bias: polar residues.

This is an uncharacterized protein from Saccharomyces cerevisiae (strain ATCC 204508 / S288c) (Baker's yeast).